A 452-amino-acid chain; its full sequence is Bifunctional protein GlmU (452 aa).

Residues 1 to 232 (MTSRTSLTIV…EDEVRGINTK (232 aa)) are pyrophosphorylase. Residues 11-14 (LAAG), Lys25, Gln78, and 83-84 (GT) contribute to the UDP-N-acetyl-alpha-D-glucosamine site. Position 108 (Asp108) interacts with Mg(2+). UDP-N-acetyl-alpha-D-glucosamine contacts are provided by Gly144, Glu158, Asn173, and Asn230. Mg(2+) is bound at residue Asn230. The tract at residues 233–253 (AQLAEAEAVMQARLRQAALDA) is linker. Residues 254-452 (GVTMIAPETV…KTRGKTRPAK (199 aa)) form an N-acetyltransferase region. 2 residues coordinate UDP-N-acetyl-alpha-D-glucosamine: Arg319 and Lys337. The active-site Proton acceptor is His349. Residues Tyr352 and Asn363 each contribute to the UDP-N-acetyl-alpha-D-glucosamine site. Residues Ala366, 372–373 (NY), Ser391, Ser409, and Arg426 each bind acetyl-CoA.

It in the N-terminal section; belongs to the N-acetylglucosamine-1-phosphate uridyltransferase family. In the C-terminal section; belongs to the transferase hexapeptide repeat family. In terms of assembly, homotrimer. Requires Mg(2+) as cofactor.

It localises to the cytoplasm. The enzyme catalyses alpha-D-glucosamine 1-phosphate + acetyl-CoA = N-acetyl-alpha-D-glucosamine 1-phosphate + CoA + H(+). It catalyses the reaction N-acetyl-alpha-D-glucosamine 1-phosphate + UTP + H(+) = UDP-N-acetyl-alpha-D-glucosamine + diphosphate. It participates in nucleotide-sugar biosynthesis; UDP-N-acetyl-alpha-D-glucosamine biosynthesis; N-acetyl-alpha-D-glucosamine 1-phosphate from alpha-D-glucosamine 6-phosphate (route II): step 2/2. Its pathway is nucleotide-sugar biosynthesis; UDP-N-acetyl-alpha-D-glucosamine biosynthesis; UDP-N-acetyl-alpha-D-glucosamine from N-acetyl-alpha-D-glucosamine 1-phosphate: step 1/1. The protein operates within bacterial outer membrane biogenesis; LPS lipid A biosynthesis. Catalyzes the last two sequential reactions in the de novo biosynthetic pathway for UDP-N-acetylglucosamine (UDP-GlcNAc). The C-terminal domain catalyzes the transfer of acetyl group from acetyl coenzyme A to glucosamine-1-phosphate (GlcN-1-P) to produce N-acetylglucosamine-1-phosphate (GlcNAc-1-P), which is converted into UDP-GlcNAc by the transfer of uridine 5-monophosphate (from uridine 5-triphosphate), a reaction catalyzed by the N-terminal domain. This is Bifunctional protein GlmU from Rhodopseudomonas palustris (strain BisA53).